A 142-amino-acid chain; its full sequence is Peptide methionine sulfoxide reductase MsrB (142 aa).

Residues 3 to 126 form the MsrB domain; it reads KEELKKKLSP…NSAALRFIPF (124 aa). The Nucleophile role is filled by Cys115.

This sequence belongs to the MsrB Met sulfoxide reductase family.

The enzyme catalyses L-methionyl-[protein] + [thioredoxin]-disulfide + H2O = L-methionyl-(R)-S-oxide-[protein] + [thioredoxin]-dithiol. The polypeptide is Peptide methionine sulfoxide reductase MsrB (Lactococcus lactis subsp. cremoris (strain MG1363)).